Here is an 829-residue protein sequence, read N- to C-terminus: Dipeptidyl peptidase family member 2 (829 aa).

The Cytoplasmic segment spans residues 1–27 (MENDNYDVEEQGCSVFNGKHGYFARSC). Residues 28–48 (CVVFILIICVIFVFSVIFTFM) traverse the membrane as a helical; Signal-anchor for type II membrane protein segment. Residues 49 to 829 (QNPINLNSDN…DCFKSNLDLL (781 aa)) are Extracellular-facing. Residues Asn61, Asn66, Asn183, Asn209, Asn314, and Asn359 are each glycosylated (N-linked (GlcNAc...) asparagine). A disulfide bond links Cys514 and Cys533. Ser691 acts as the Charge relay system in catalysis. A disulfide bond links Cys711 and Cys821. A glycan (N-linked (GlcNAc...) asparagine) is linked at Asn754. Active-site charge relay system residues include Asp768 and His800.

This sequence belongs to the peptidase S9B family. DPPIV subfamily.

Its subcellular location is the cell membrane. In terms of biological role, removes N-terminal dipeptides sequentially from polypeptides. Essential for control of distal tip cell migration. This chain is Dipeptidyl peptidase family member 2 (dpf-2), found in Caenorhabditis elegans.